Consider the following 223-residue polypeptide: Cytidylate kinase (223 aa).

12–20 (GPSGVGKGT) provides a ligand contact to ATP.

It belongs to the cytidylate kinase family. Type 1 subfamily.

It is found in the cytoplasm. It catalyses the reaction CMP + ATP = CDP + ADP. It carries out the reaction dCMP + ATP = dCDP + ADP. This Xylella fastidiosa (strain M23) protein is Cytidylate kinase.